A 369-amino-acid polypeptide reads, in one-letter code: Tetraacyldisaccharide 4'-kinase (369 aa).

Residue 52–59 (TVGGTGKT) coordinates ATP.

This sequence belongs to the LpxK family.

It catalyses the reaction a lipid A disaccharide + ATP = a lipid IVA + ADP + H(+). Its pathway is glycolipid biosynthesis; lipid IV(A) biosynthesis; lipid IV(A) from (3R)-3-hydroxytetradecanoyl-[acyl-carrier-protein] and UDP-N-acetyl-alpha-D-glucosamine: step 6/6. Functionally, transfers the gamma-phosphate of ATP to the 4'-position of a tetraacyldisaccharide 1-phosphate intermediate (termed DS-1-P) to form tetraacyldisaccharide 1,4'-bis-phosphate (lipid IVA). In Parabacteroides distasonis (strain ATCC 8503 / DSM 20701 / CIP 104284 / JCM 5825 / NCTC 11152), this protein is Tetraacyldisaccharide 4'-kinase.